Consider the following 433-residue polypeptide: Serine--tRNA ligase (433 aa).

L-serine is bound at residue 236-238 (TAE). 267 to 269 (RSE) contacts ATP. L-serine is bound at residue Glu-290. An ATP-binding site is contributed by 354 to 357 (EISS). Residue Ser-394 coordinates L-serine.

This sequence belongs to the class-II aminoacyl-tRNA synthetase family. Type-1 seryl-tRNA synthetase subfamily. Homodimer. The tRNA molecule binds across the dimer.

The protein resides in the cytoplasm. The catalysed reaction is tRNA(Ser) + L-serine + ATP = L-seryl-tRNA(Ser) + AMP + diphosphate + H(+). It carries out the reaction tRNA(Sec) + L-serine + ATP = L-seryl-tRNA(Sec) + AMP + diphosphate + H(+). It functions in the pathway aminoacyl-tRNA biosynthesis; selenocysteinyl-tRNA(Sec) biosynthesis; L-seryl-tRNA(Sec) from L-serine and tRNA(Sec): step 1/1. Its function is as follows. Catalyzes the attachment of serine to tRNA(Ser). Is also able to aminoacylate tRNA(Sec) with serine, to form the misacylated tRNA L-seryl-tRNA(Sec), which will be further converted into selenocysteinyl-tRNA(Sec). The protein is Serine--tRNA ligase of Acidiphilium cryptum (strain JF-5).